A 218-amino-acid polypeptide reads, in one-letter code: Adenylate kinase (218 aa).

Position 10–15 (10–15 (GAGKGT)) interacts with ATP. Positions 30-59 (STGDIFREAIAKGTELGRKVQDIVNSGNLV) are NMP. AMP is bound by residues Thr-31, Arg-36, 57–59 (NLV), 85–88 (GYPR), and Gln-92. The interval 126–163 (TRRVCSKCGKVYNVITLPSKVEGICDDCGGTLIQRDDD) is LID. Residue Arg-127 coordinates ATP. Cys-130 and Cys-133 together coordinate Zn(2+). 136–137 (VY) contacts ATP. Zn(2+) contacts are provided by Cys-150 and Cys-153. AMP contacts are provided by Arg-160 and Arg-171. Lys-199 provides a ligand contact to ATP.

Belongs to the adenylate kinase family. Monomer.

Its subcellular location is the cytoplasm. It carries out the reaction AMP + ATP = 2 ADP. It functions in the pathway purine metabolism; AMP biosynthesis via salvage pathway; AMP from ADP: step 1/1. Catalyzes the reversible transfer of the terminal phosphate group between ATP and AMP. Plays an important role in cellular energy homeostasis and in adenine nucleotide metabolism. This chain is Adenylate kinase, found in Fervidobacterium nodosum (strain ATCC 35602 / DSM 5306 / Rt17-B1).